A 282-amino-acid chain; its full sequence is Putative 4-diphosphocytidyl-2-C-methyl-D-erythritol kinase (282 aa).

K9 is a catalytic residue. 93 to 103 (PVSAGLAGGST) provides a ligand contact to ATP. The active site involves D135.

This sequence belongs to the GHMP kinase family. IspE subfamily.

The catalysed reaction is 4-CDP-2-C-methyl-D-erythritol + ATP = 4-CDP-2-C-methyl-D-erythritol 2-phosphate + ADP + H(+). Functionally, catalyzes the phosphorylation of the position 2 hydroxy group of 4-diphosphocytidyl-2C-methyl-D-erythritol. This chain is Putative 4-diphosphocytidyl-2-C-methyl-D-erythritol kinase, found in Staphylococcus saprophyticus subsp. saprophyticus (strain ATCC 15305 / DSM 20229 / NCIMB 8711 / NCTC 7292 / S-41).